Consider the following 614-residue polypeptide: Probable peptide-binding protein YejA (614 aa).

The N-terminal stretch at 1–27 (MILAPLKSRILIALAASALLIPAVASA) is a signal peptide.

Belongs to the bacterial solute-binding protein 5 family. In terms of assembly, the complex is composed of one ATP-binding protein (YejF), two transmembrane proteins (YejB and YejE) and a solute-binding protein (YejA).

It localises to the periplasm. In terms of biological role, probably part of the ABC transporter complex YejABEF, which is likely involved in broad-spectrum peptide import. This chain is Probable peptide-binding protein YejA, found in Agrobacterium fabrum (strain C58 / ATCC 33970) (Agrobacterium tumefaciens (strain C58)).